The sequence spans 131 residues: Large ribosomal subunit protein bL17 (131 aa).

It belongs to the bacterial ribosomal protein bL17 family. In terms of assembly, part of the 50S ribosomal subunit. Contacts protein L32.

The chain is Large ribosomal subunit protein bL17 from Cupriavidus metallidurans (strain ATCC 43123 / DSM 2839 / NBRC 102507 / CH34) (Ralstonia metallidurans).